A 486-amino-acid polypeptide reads, in one-letter code: ATP synthase subunit beta (486 aa).

Residue 170-177 coordinates ATP; sequence GGAGVGKT.

The protein belongs to the ATPase alpha/beta chains family. As to quaternary structure, F-type ATPases have 2 components, CF(1) - the catalytic core - and CF(0) - the membrane proton channel. CF(1) has five subunits: alpha(3), beta(3), gamma(1), delta(1), epsilon(1). CF(0) has three main subunits: a(1), b(2) and c(9-12). The alpha and beta chains form an alternating ring which encloses part of the gamma chain. CF(1) is attached to CF(0) by a central stalk formed by the gamma and epsilon chains, while a peripheral stalk is formed by the delta and b chains.

It localises to the cell membrane. It catalyses the reaction ATP + H2O + 4 H(+)(in) = ADP + phosphate + 5 H(+)(out). Its function is as follows. Produces ATP from ADP in the presence of a proton gradient across the membrane. The catalytic sites are hosted primarily by the beta subunits. The polypeptide is ATP synthase subunit beta (Clavibacter sepedonicus (Clavibacter michiganensis subsp. sepedonicus)).